The following is a 395-amino-acid chain: Inner membrane protein YjgN (395 aa).

Residues 1-24 are Cytoplasmic-facing; it reads MNNVISSKDNHNHTLVFTGKGGKY. The helical transmembrane segment at 25–45 threads the bilayer; sequence FVICLVNFLLTCITLGIYAPW. Residues 46 to 71 lie on the Periplasmic side of the membrane; it reads AMVKCRRYIYTNMTLNNQPFAYKATG. A helical membrane pass occupies residues 72–92; the sequence is GALFISVLLVFIIYIVSLSLI. The Cytoplasmic segment spans residues 93–95; that stretch reads EHG. Residues 96 to 116 form a helical membrane-spanning segment; sequence HPGLGFTLFGLLIAIIPFMAV. Topologically, residues 117 to 146 are periplasmic; the sequence is KGLQYQAMMTSLNGVHFGFQCSMRRAWWYM. The chain crosses the membrane as a helical span at residues 147 to 167; that stretch reads FALPVLLMVALYIVLYIISLV. A topological domain (cytoplasmic) is located at residue T168. Residues 169 to 189 form a helical membrane-spanning segment; sequence IAVGGLVFSIVFLGLLAIIGI. The Periplasmic segment spans residues 190-229; it reads GVINGITYSKWMTLFGNGANFGIHRFSIQVNVKTCIRGCV. Residues 230–250 form a helical membrane-spanning segment; sequence LAMLTLFPFAVVIGYLIAPVF. The Cytoplasmic portion of the chain corresponds to 251 to 275; that stretch reads TDMILLSMMGNAQAGGALILQYYGQ. A helical transmembrane segment spans residues 276–296; sequence IMACYFLYFLAIIVVTSYLYV. The Periplasmic segment spans residues 297–327; it reads ALRNLFLNNLSLANDSIRFHSSVTAHGMLWR. The chain crosses the membrane as a helical span at residues 328–348; the sequence is LLVVFVISGVTLGLAYPWLKI. The Cytoplasmic portion of the chain corresponds to 349 to 395; the sequence is WLVSWLAQNTQVQGDLDSLELTNDEKPLENSPLMWISRGIMPYFPFI.

It localises to the cell inner membrane. The polypeptide is Inner membrane protein YjgN (yjgN) (Salmonella typhimurium (strain LT2 / SGSC1412 / ATCC 700720)).